The following is a 617-amino-acid chain: NADPH-dependent diflavin oxidoreductase 1 (617 aa).

The 145-residue stretch at 3–147 folds into the Flavodoxin-like domain; it reads PMILYASETG…AFLPWLQQTL (145 aa). FMN is bound by residues 9–14, 56–59, 94–103, and glutamate 129; these read SETGNA, STHG, and LGDSSYERFC. An FAD-binding FR-type domain is found at 226-465; sequence DDWVWATLKK…HIASPTLFLP (240 aa). Residues 404-407 and 438-441 contribute to the FAD site; these read RQFS and GLCS. NADP(+) is bound by residues threonine 479, 534 to 535, and 540 to 544; these read SR and RIYVQ. Tryptophan 617 is an FAD binding site.

It belongs to the NADPH-dependent diflavin oxidoreductase NDOR1 family. In the N-terminal section; belongs to the flavodoxin family. This sequence in the C-terminal section; belongs to the flavoprotein pyridine nucleotide cytochrome reductase family. As to quaternary structure, interacts with DRE2; as part of the cytosolic iron-sulfur (Fe-S) protein assembly (CIA) machinery. Requires FAD as cofactor. The cofactor is FMN.

It localises to the cytoplasm. The protein resides in the mitochondrion. It catalyses the reaction 2 oxidized [2Fe-2S]-[protein] + NADPH = 2 reduced [2Fe-2S]-[protein] + NADP(+) + H(+). NADPH-dependent reductase which is a central component of the cytosolic iron-sulfur (Fe-S) protein assembly (CIA) machinery. Transfers electrons from NADPH via its FAD and FMN prosthetic groups to the [2Fe-2S] cluster of DRE2, another key component of the CIA machinery. In turn, this reduced cluster provides electrons for assembly of cytosolic iron-sulfur cluster proteins. Positively controls H(2)O(2)-induced cell death. This chain is NADPH-dependent diflavin oxidoreductase 1, found in Cryptococcus neoformans var. neoformans serotype D (strain B-3501A) (Filobasidiella neoformans).